The following is a 262-amino-acid chain: Cytochrome c oxidase subunit 3 (262 aa).

Transmembrane regions (helical) follow at residues 11–31 (LVEPSPWPLVGGSAAFTLTVG), 32–52 (LVMWFHYNSISLMILGLVMIV), 83–103 (GMVLFIVSEVFFFLAFFWAFF), 125–147 (LNAFAVPLLNTAVLLSSGVTVTW), 160–180 (AIQSLAITVMLGLYFTGLQAW), 198–218 (FFVATGFHGLHVIIGSTFLMV), and 240–260 (AWYWHFVDVVWLFLYVCIYWW).

The protein belongs to the cytochrome c oxidase subunit 3 family. In terms of assembly, component of the cytochrome c oxidase (complex IV, CIV), a multisubunit enzyme composed of a catalytic core of 3 subunits and several supernumerary subunits. The complex exists as a monomer or a dimer and forms supercomplexes (SCs) in the inner mitochondrial membrane with ubiquinol-cytochrome c oxidoreductase (cytochrome b-c1 complex, complex III, CIII).

It localises to the mitochondrion inner membrane. It carries out the reaction 4 Fe(II)-[cytochrome c] + O2 + 8 H(+)(in) = 4 Fe(III)-[cytochrome c] + 2 H2O + 4 H(+)(out). In terms of biological role, component of the cytochrome c oxidase, the last enzyme in the mitochondrial electron transport chain which drives oxidative phosphorylation. The respiratory chain contains 3 multisubunit complexes succinate dehydrogenase (complex II, CII), ubiquinol-cytochrome c oxidoreductase (cytochrome b-c1 complex, complex III, CIII) and cytochrome c oxidase (complex IV, CIV), that cooperate to transfer electrons derived from NADH and succinate to molecular oxygen, creating an electrochemical gradient over the inner membrane that drives transmembrane transport and the ATP synthase. Cytochrome c oxidase is the component of the respiratory chain that catalyzes the reduction of oxygen to water. Electrons originating from reduced cytochrome c in the intermembrane space (IMS) are transferred via the dinuclear copper A center (CU(A)) of subunit 2 and heme A of subunit 1 to the active site in subunit 1, a binuclear center (BNC) formed by heme A3 and copper B (CU(B)). The BNC reduces molecular oxygen to 2 water molecules using 4 electrons from cytochrome c in the IMS and 4 protons from the mitochondrial matrix. This chain is Cytochrome c oxidase subunit 3 (COIII), found in Branchiostoma floridae (Florida lancelet).